Consider the following 228-residue polypeptide: F-box protein At5g67140 (228 aa).

The F-box domain occupies 4–51 (EAAIDRLPLDLLAYIFSLATSFTVLAQASGVCKKWRKAVNQSMARRET).

In Arabidopsis thaliana (Mouse-ear cress), this protein is F-box protein At5g67140.